A 482-amino-acid chain; its full sequence is MKFIIKLFPEITIKSQSVRLRFIKILTGNIRNVLKHYDETLAVVRHWDNIEVRAKDEKQRLAIRDALTRIPGIHHILEVEDVPFTDMHDIFEKALVQYRDQLEGKTFCVRVKRRGKHDFSSIDVERYVGGGLNQHIESARVKLTNPDVTVHLEVEDDRLLLIKGRYEGIGGFPIGTQEDVLSLISGGFDSGVSSYMLMRRGCRVHYCFFNLGGAAHEIGVRQVAHYLWNRFGSSHRVRFVAINFEPVVGEILEKIDDGQMGVILKRMMVRAASKVAERYGVQALVTGEALGQVSSQTLTNLRLIDNVSDTLILRPLISYDKEHIINLARQIGTEDFARTMPEYCGVISKSPTVKAVKSKIEAEEEKFDFSILDKVVEEANNVDIREIAQQTEQEVVEVETVNGFGPNDVILDIRSVDEQEDKPLKVEGIDVVSLPFYKLSTKFGDLDQNRTWLLWCERGVMSRLQALYLREQGFNNVKVYRP.

Residues 61–165 (LAIRDALTRI…DDRLLLIKGR (105 aa)) enclose the THUMP domain. ATP-binding positions include 183–184 (LI), Lys265, Gly287, and Gln296. Cys344 and Cys456 are disulfide-bonded. The Rhodanese domain maps to 404–482 (FGPNDVILDI…GFNNVKVYRP (79 aa)). The Cysteine persulfide intermediate role is filled by Cys456.

The protein belongs to the ThiI family.

The protein localises to the cytoplasm. The enzyme catalyses [ThiI sulfur-carrier protein]-S-sulfanyl-L-cysteine + a uridine in tRNA + 2 reduced [2Fe-2S]-[ferredoxin] + ATP + H(+) = [ThiI sulfur-carrier protein]-L-cysteine + a 4-thiouridine in tRNA + 2 oxidized [2Fe-2S]-[ferredoxin] + AMP + diphosphate. The catalysed reaction is [ThiS sulfur-carrier protein]-C-terminal Gly-Gly-AMP + S-sulfanyl-L-cysteinyl-[cysteine desulfurase] + AH2 = [ThiS sulfur-carrier protein]-C-terminal-Gly-aminoethanethioate + L-cysteinyl-[cysteine desulfurase] + A + AMP + 2 H(+). Its pathway is cofactor biosynthesis; thiamine diphosphate biosynthesis. Functionally, catalyzes the ATP-dependent transfer of a sulfur to tRNA to produce 4-thiouridine in position 8 of tRNAs, which functions as a near-UV photosensor. Also catalyzes the transfer of sulfur to the sulfur carrier protein ThiS, forming ThiS-thiocarboxylate. This is a step in the synthesis of thiazole, in the thiamine biosynthesis pathway. The sulfur is donated as persulfide by IscS. This Shigella sonnei (strain Ss046) protein is tRNA sulfurtransferase.